The sequence spans 224 residues: Lipoprotein-releasing system ATP-binding protein LolD (224 aa).

One can recognise an ABC transporter domain in the interval 5-224 (LEILDVSKCY…SLSGGMLTEL (220 aa)). 40–47 (GSSGSGKS) contributes to the ATP binding site.

Belongs to the ABC transporter superfamily. Lipoprotein translocase (TC 3.A.1.125) family. In terms of assembly, the complex is composed of two ATP-binding proteins (LolD) and two transmembrane proteins (LolC and LolE).

The protein localises to the cell inner membrane. Functionally, part of the ABC transporter complex LolCDE involved in the translocation of mature outer membrane-directed lipoproteins, from the inner membrane to the periplasmic chaperone, LolA. Responsible for the formation of the LolA-lipoprotein complex in an ATP-dependent manner. The chain is Lipoprotein-releasing system ATP-binding protein LolD from Anaplasma marginale (strain St. Maries).